A 120-amino-acid chain; its full sequence is Ribonuclease P protein component 4 (120 aa).

Zn(2+) is bound by residues Cys-68, Cys-71, Cys-97, and Cys-100.

This sequence belongs to the eukaryotic/archaeal RNase P protein component 4 family. Consists of a catalytic RNA component and at least 5 protein subunits. Forms a heterodimeric subcomplex with Rnp1. Reconstituted enzyme missing individual protein subunits is suboptimally active, showing each subunit contributes to optimization of activity. Zn(2+) serves as cofactor.

It is found in the cytoplasm. The enzyme catalyses Endonucleolytic cleavage of RNA, removing 5'-extranucleotides from tRNA precursor.. In terms of biological role, part of ribonuclease P, a protein complex that generates mature tRNA molecules by cleaving their 5'-ends. Binds RNase P RNA. This Pyrococcus horikoshii (strain ATCC 700860 / DSM 12428 / JCM 9974 / NBRC 100139 / OT-3) protein is Ribonuclease P protein component 4.